A 348-amino-acid chain; its full sequence is GTP 3',8-cyclase (348 aa).

The region spanning 24 to 242 (PFGRAVTYLR…EKQFTLTDID (219 aa)) is the Radical SAM core domain. Residue Arg-33 participates in GTP binding. Residues Cys-40 and Cys-44 each coordinate [4Fe-4S] cluster. An S-adenosyl-L-methionine-binding site is contributed by Tyr-46. Position 47 (Cys-47) interacts with [4Fe-4S] cluster. Position 82 (Arg-82) interacts with GTP. Gly-86 is an S-adenosyl-L-methionine binding site. Position 115 (Thr-115) interacts with GTP. Ser-139 is a binding site for S-adenosyl-L-methionine. Lys-175 contacts GTP. Met-209 contributes to the S-adenosyl-L-methionine binding site. [4Fe-4S] cluster-binding residues include Cys-272 and Cys-275. 277–279 (RVR) is a GTP binding site. Residue Cys-289 participates in [4Fe-4S] cluster binding.

The protein belongs to the radical SAM superfamily. MoaA family. In terms of assembly, monomer and homodimer. Requires [4Fe-4S] cluster as cofactor.

The enzyme catalyses GTP + AH2 + S-adenosyl-L-methionine = (8S)-3',8-cyclo-7,8-dihydroguanosine 5'-triphosphate + 5'-deoxyadenosine + L-methionine + A + H(+). It participates in cofactor biosynthesis; molybdopterin biosynthesis. Its function is as follows. Catalyzes the cyclization of GTP to (8S)-3',8-cyclo-7,8-dihydroguanosine 5'-triphosphate. The sequence is that of GTP 3',8-cyclase from Rhizobium etli (strain CIAT 652).